The primary structure comprises 490 residues: Colicin-5 (490 aa).

Over residues Met1–Ser20 the composition is skewed to polar residues. Disordered regions lie at residues Met1–Gly29 and Gln146–Arg171. Over residues Gln146–Ala170 the composition is skewed to basic and acidic residues. The helical transmembrane segment at Ile447–Ile467 threads the bilayer.

Belongs to the channel forming colicin family.

It localises to the host membrane. Functionally, this colicin is a channel-forming colicin. This class of transmembrane toxins depolarize the cytoplasmic membrane, leading to dissipation of cellular energy. Its function is as follows. Colicins are polypeptide toxins produced by and active against E.coli and closely related bacteria. This Escherichia coli protein is Colicin-5 (cfa).